The sequence spans 422 residues: MALPWVEKYRPKSFADVVDQEEAKYVLASWICARFRAPKDFCTRWAKKKDKEILDARAVLLAGPPGVGKTTLIHALAREIGYELIELNASDVRTAERLKEVVGRGLREGSLFGYGGKIVLFDEVDGLHVKEDAGGLEAIIEIIENSKVPIVMTANNPYDPRFRPLRDISLVVNLKRLSEEEVVEVLRRICTSEGAKCEEEALRSIAKSSLGDLRAAINDLQMYLSGGRKTLTVDDIKRVGERNPQLSMFEILDRVYRARWFDEARAISFNPSFDWEQYFIWATETIPVVYKEIETMSVAYDRLSKADMFIGRIKRTQEWELLPYALELALGGVSQIKSKPRLPPFIKYGFPQRLLILAKSREARKRRDVLVEYLAQNLHVSRSYVKSEIIYVLGVLAKSDSKIVERLSKALGINAIDIKTLL.

An ATP-binding site is contributed by 63 to 70; the sequence is GPPGVGKT.

It belongs to the activator 1 small subunits family. RfcL subfamily. In terms of assembly, heteromultimer composed of small subunits (RfcS) and large subunits (RfcL).

Functionally, part of the RFC clamp loader complex which loads the PCNA sliding clamp onto DNA. This Pyrobaculum arsenaticum (strain DSM 13514 / JCM 11321 / PZ6) protein is Replication factor C large subunit.